Here is a 126-residue protein sequence, read N- to C-terminus: Transcription antitermination protein NusB (126 aa).

Belongs to the NusB family.

Involved in transcription antitermination. Required for transcription of ribosomal RNA (rRNA) genes. Binds specifically to the boxA antiterminator sequence of the ribosomal RNA (rrn) operons. This is Transcription antitermination protein NusB from Oceanobacillus iheyensis (strain DSM 14371 / CIP 107618 / JCM 11309 / KCTC 3954 / HTE831).